A 372-amino-acid polypeptide reads, in one-letter code: N-methyl-L-tryptophan oxidase (372 aa).

4–34 is an FAD binding site; the sequence is DLIIIGSGSVGAAAGYYATRAGLKVLMTDAH. At cysteine 307 the chain carries S-8alpha-FAD cysteine.

Belongs to the MSOX/MTOX family. MTOX subfamily. As to quaternary structure, monomer. Requires FAD as cofactor.

The catalysed reaction is N(alpha)-methyl-L-tryptophan + O2 + H2O = L-tryptophan + formaldehyde + H2O2. Catalyzes the oxidative demethylation of N-methyl-L-tryptophan. In Salmonella typhi, this protein is N-methyl-L-tryptophan oxidase.